A 420-amino-acid chain; its full sequence is Glucose-1-phosphate adenylyltransferase (420 aa).

Alpha-D-glucose 1-phosphate-binding positions include Tyr107, Gly172, 187–188 (EK), and Ser205.

Belongs to the bacterial/plant glucose-1-phosphate adenylyltransferase family. Homotetramer.

It carries out the reaction alpha-D-glucose 1-phosphate + ATP + H(+) = ADP-alpha-D-glucose + diphosphate. The protein operates within glycan biosynthesis; glycogen biosynthesis. Involved in the biosynthesis of ADP-glucose, a building block required for the elongation reactions to produce glycogen. Catalyzes the reaction between ATP and alpha-D-glucose 1-phosphate (G1P) to produce pyrophosphate and ADP-Glc. The polypeptide is Glucose-1-phosphate adenylyltransferase (Rhodopseudomonas palustris (strain HaA2)).